The chain runs to 244 residues: Biosynthetic peptidoglycan transglycosylase (244 aa).

The chain crosses the membrane as a helical span at residues 23–43; the sequence is LVVIGAWLAGILLFSFLPVPF.

This sequence belongs to the glycosyltransferase 51 family.

The protein resides in the cell inner membrane. It catalyses the reaction [GlcNAc-(1-&gt;4)-Mur2Ac(oyl-L-Ala-gamma-D-Glu-L-Lys-D-Ala-D-Ala)](n)-di-trans,octa-cis-undecaprenyl diphosphate + beta-D-GlcNAc-(1-&gt;4)-Mur2Ac(oyl-L-Ala-gamma-D-Glu-L-Lys-D-Ala-D-Ala)-di-trans,octa-cis-undecaprenyl diphosphate = [GlcNAc-(1-&gt;4)-Mur2Ac(oyl-L-Ala-gamma-D-Glu-L-Lys-D-Ala-D-Ala)](n+1)-di-trans,octa-cis-undecaprenyl diphosphate + di-trans,octa-cis-undecaprenyl diphosphate + H(+). It participates in cell wall biogenesis; peptidoglycan biosynthesis. Functionally, peptidoglycan polymerase that catalyzes glycan chain elongation from lipid-linked precursors. In Pectobacterium carotovorum subsp. carotovorum (strain PC1), this protein is Biosynthetic peptidoglycan transglycosylase.